Here is a 97-residue protein sequence, read N- to C-terminus: Co-chaperonin GroES (97 aa).

This sequence belongs to the GroES chaperonin family. In terms of assembly, heptamer of 7 subunits arranged in a ring. Interacts with the chaperonin GroEL.

It localises to the cytoplasm. Its function is as follows. Together with the chaperonin GroEL, plays an essential role in assisting protein folding. The GroEL-GroES system forms a nano-cage that allows encapsulation of the non-native substrate proteins and provides a physical environment optimized to promote and accelerate protein folding. GroES binds to the apical surface of the GroEL ring, thereby capping the opening of the GroEL channel. This chain is Co-chaperonin GroES, found in Buchnera aphidicola subsp. Baizongia pistaciae (strain Bp).